The primary structure comprises 460 residues: Ammonium transporter 1 member 3 (460 aa).

Helical transmembrane passes span 15-37 (AIYL…MLCA), 50-72 (LTNV…AFAF), 98-117 (FFLY…SGSI), 124-146 (TAYL…HWLW), 166-188 (IDFA…GSIV), 209-227 (NATL…WFGF), 255-277 (AVTT…RLLV), 305-327 (PWAA…ILAL), 337-356 (AAQL…GLFA), and 377-399 (GLIL…SIVV).

This sequence belongs to the ammonia transporter channel (TC 1.A.11.2) family. As to expression, leaves.

Its subcellular location is the membrane. Ammonium transporter that may be involved in ammonium transport throughout the plant. The sequence is that of Ammonium transporter 1 member 3 (AMT1-3) from Solanum lycopersicum (Tomato).